The primary structure comprises 131 residues: Peptide methionine sulfoxide reductase MsrB (131 aa).

Residues 8-130 (LEEWKQMLDP…NSVCLDLVPR (123 aa)) enclose the MsrB domain. Zn(2+) contacts are provided by Cys47, Cys50, Cys96, and Cys99. Cys119 serves as the catalytic Nucleophile.

The protein belongs to the MsrB Met sulfoxide reductase family. Zn(2+) serves as cofactor.

It catalyses the reaction L-methionyl-[protein] + [thioredoxin]-disulfide + H2O = L-methionyl-(R)-S-oxide-[protein] + [thioredoxin]-dithiol. This chain is Peptide methionine sulfoxide reductase MsrB, found in Pseudomonas syringae pv. syringae (strain B728a).